We begin with the raw amino-acid sequence, 445 residues long: Argininosuccinate synthase (445 aa).

Residues 17–25 and A43 contribute to the ATP site; that span reads AFSGGLDTS. An L-citrulline-binding site is contributed by Y99. Residues G129 and T131 each contribute to the ATP site. The L-aspartate site is built by T131, N135, and D136. Residue N135 participates in L-citrulline binding. D136 is a binding site for ATP. Residues R139 and S192 each contribute to the L-citrulline site. D194 serves as a coordination point for ATP. Residues T201, E203, and E280 each contribute to the L-citrulline site.

Belongs to the argininosuccinate synthase family. Type 2 subfamily. Homotetramer.

The protein localises to the cytoplasm. The enzyme catalyses L-citrulline + L-aspartate + ATP = 2-(N(omega)-L-arginino)succinate + AMP + diphosphate + H(+). It functions in the pathway amino-acid biosynthesis; L-arginine biosynthesis; L-arginine from L-ornithine and carbamoyl phosphate: step 2/3. The sequence is that of Argininosuccinate synthase from Burkholderia ambifaria (strain ATCC BAA-244 / DSM 16087 / CCUG 44356 / LMG 19182 / AMMD) (Burkholderia cepacia (strain AMMD)).